The chain runs to 401 residues: Tryptophan synthase beta chain (401 aa).

Lysine 92 is modified (N6-(pyridoxal phosphate)lysine).

Belongs to the TrpB family. As to quaternary structure, tetramer of two alpha and two beta chains. Pyridoxal 5'-phosphate is required as a cofactor.

The enzyme catalyses (1S,2R)-1-C-(indol-3-yl)glycerol 3-phosphate + L-serine = D-glyceraldehyde 3-phosphate + L-tryptophan + H2O. The protein operates within amino-acid biosynthesis; L-tryptophan biosynthesis; L-tryptophan from chorismate: step 5/5. The beta subunit is responsible for the synthesis of L-tryptophan from indole and L-serine. In Vesicomyosocius okutanii subsp. Calyptogena okutanii (strain HA), this protein is Tryptophan synthase beta chain.